The sequence spans 404 residues: Deoxyguanosinetriphosphate triphosphohydrolase-like protein (404 aa).

The interval 1-33 (MSVGMAAPRAAYGCDPDRSRGRQFAEPPSNNRS) is disordered. The HD domain maps to 69 to 217 (RLTHSLEVAQ…AAIADDIAYD (149 aa)).

It belongs to the dGTPase family. Type 2 subfamily.

This is Deoxyguanosinetriphosphate triphosphohydrolase-like protein from Rhodopseudomonas palustris (strain BisB5).